Reading from the N-terminus, the 345-residue chain is Treponemal membrane protein A (345 aa).

Positions 1–21 (MNAHTLVYSGVALACAAMLGS) are cleaved as a signal peptide. Cysteine 22 carries the N-palmitoyl cysteine lipid modification. Cysteine 22 is lipidated: S-diacylglycerol cysteine. The segment at 256-345 (QSAKTKQKAS…SSMNEEGASR (90 aa)) is disordered. Over residues 314–323 (SDTSSPSRVQ) the composition is skewed to polar residues.

To T.phagedenis TmpA.

It localises to the cell membrane. This is Treponemal membrane protein A (tmpA) from Treponema pallidum (strain Nichols).